The chain runs to 142 residues: Ribosome-binding factor A (142 aa).

The tract at residues 118-142 (DEAKQQEHGTVENAKQDGDKAEDDK) is disordered.

Belongs to the RbfA family. In terms of assembly, monomer. Binds 30S ribosomal subunits, but not 50S ribosomal subunits or 70S ribosomes.

Its subcellular location is the cytoplasm. Its function is as follows. One of several proteins that assist in the late maturation steps of the functional core of the 30S ribosomal subunit. Associates with free 30S ribosomal subunits (but not with 30S subunits that are part of 70S ribosomes or polysomes). Required for efficient processing of 16S rRNA. May interact with the 5'-terminal helix region of 16S rRNA. This is Ribosome-binding factor A from Shewanella piezotolerans (strain WP3 / JCM 13877).